The following is a 120-amino-acid chain: Small ribosomal subunit protein bS16 (120 aa).

The disordered stretch occupies residues 81–120 (GLAKRPTRNNPQKAEPGEKAKERAAKRAEKAAAPAEDAAA). The span at 95–110 (EPGEKAKERAAKRAEK) shows a compositional bias: basic and acidic residues. Positions 111–120 (AAAPAEDAAA) are enriched in low complexity.

It belongs to the bacterial ribosomal protein bS16 family.

The chain is Small ribosomal subunit protein bS16 from Methylorubrum extorquens (strain CM4 / NCIMB 13688) (Methylobacterium extorquens).